The sequence spans 359 residues: Probable E3 ubiquitin-protein ligase LUL4 (359 aa).

Residues 1–35 are disordered; the sequence is MGISFSNNNRRRDNNNRRHLHHYPPPPPYYYLDPP. Residue Gly-2 is the site of N-myristoyl glycine attachment. Pro residues predominate over residues 23–35; that stretch reads YPPPPPYYYLDPP. Residues 148–267 form a DAR2 domain region; it reads FVFDALFDGS…GSFKVKVVKQ (120 aa). The segment at 302-341 adopts an RING-type zinc-finger fold; the sequence is CVICMTEAKDTAVLPCRHLCMCSDCAKELRLQSNKCPICR.

It belongs to the RING-type zinc finger family. LOG2 subfamily.

The catalysed reaction is S-ubiquitinyl-[E2 ubiquitin-conjugating enzyme]-L-cysteine + [acceptor protein]-L-lysine = [E2 ubiquitin-conjugating enzyme]-L-cysteine + N(6)-ubiquitinyl-[acceptor protein]-L-lysine.. The protein operates within protein modification; protein ubiquitination. Its function is as follows. Acts as an E3 ubiquitin-protein ligase, or as part of E3 complex, which accepts ubiquitin from specific E2 ubiquitin-conjugating enzymes and then transfers it to substrates (in vitro). This chain is Probable E3 ubiquitin-protein ligase LUL4 (LUL4), found in Arabidopsis thaliana (Mouse-ear cress).